A 151-amino-acid polypeptide reads, in one-letter code: MLP-like protein 328 (151 aa).

It belongs to the MLP family.

The protein is MLP-like protein 328 (MLP328) of Arabidopsis thaliana (Mouse-ear cress).